Consider the following 331-residue polypeptide: Laforin (331 aa).

The CBM20 domain maps to 1-124 (MRFRFGVVVP…NNLVDGVYCL (124 aa)). The residue at position 25 (Ser25) is a Phosphoserine; by AMPK. Residues Trp32, Lys87, 103–107 (GPHHD), Asp197, Asp235, and Arg241 each bind substrate. A Tyrosine-protein phosphatase domain is found at 156–323 (HYSRILPNIW…EEDFFQKFGK (168 aa)). Cys266 acts as the Phosphocysteine intermediate in catalysis. The Glucan phosphatase signature motif CXAGXGR motif lies at 266 to 272 (CNAGVGR). Residues 267-272 (NAGVGR) and Tyr304 each bind substrate.

It belongs to the protein-tyrosine phosphatase family. Homodimer. Interacts with itself. Interacts with PPP1R3B, PPP1R3C, PPP1R3D, HIRIP5, and EPM2AIP1. Binds glycogen and Lafora bodies. Interacts with NHLRC1/malin (via the NHL repeats). Forms a complex with NHLRC1/malin and HSP70. Interacts with PPP1R3D; in the presence of NHLC1/malin the interaction leads to ubiquitination and autophagic degradation of PPP1R3D. Interacts (via the phosphatase domain) with MAPT/Tau; the interaction dephosphorylates MAPT. Interacts with PRDM8. Polyubiquitinated by NHLRC1/malin. Post-translationally, phosphorylation on Ser-25 by AMPK affects the phosphatase activity of the enzyme and its ability to homodimerize and interact with NHLRC1, PPP1R3C or PRKAA2.

The protein resides in the cytoplasm. The protein localises to the endoplasmic reticulum membrane. Its subcellular location is the cell membrane. The catalysed reaction is O-phospho-L-tyrosyl-[protein] + H2O = L-tyrosyl-[protein] + phosphate. It carries out the reaction O-phospho-L-seryl-[protein] + H2O = L-seryl-[protein] + phosphate. The enzyme catalyses O-phospho-L-threonyl-[protein] + H2O = L-threonyl-[protein] + phosphate. Functionally, plays an important role in preventing glycogen hyperphosphorylation and the formation of insoluble aggregates, via its activity as glycogen phosphatase, and by promoting the ubiquitination of proteins involved in glycogen metabolism via its interaction with the E3 ubiquitin ligase NHLRC1/malin. Dephosphorylates phosphotyrosine and synthetic substrates, such as para-nitrophenylphosphate (pNPP), and has low activity with phosphoserine and phosphothreonine substrates (in vitro). Has also been shown to dephosphorylate MAPT. Shows strong phosphatase activity towards complex carbohydrates in vitro, avoiding glycogen hyperphosphorylation which is associated with reduced branching and formation of insoluble aggregates. Forms a complex with NHLRC1/malin and HSP70, which suppresses the cellular toxicity of misfolded proteins by promoting their degradation through the ubiquitin-proteasome system (UPS). Acts as a scaffold protein to facilitate PPP1R3C/PTG ubiquitination by NHLRC1/malin. Also promotes proteasome-independent protein degradation through the macroautophagy pathway. The protein is Laforin (EPM2A) of Canis lupus familiaris (Dog).